Consider the following 271-residue polypeptide: Bifunctional protein FolD (271 aa).

Residues 154-156 (GRS), Ser181, and Ile222 contribute to the NADP(+) site.

Belongs to the tetrahydrofolate dehydrogenase/cyclohydrolase family. In terms of assembly, homodimer.

The catalysed reaction is (6R)-5,10-methylene-5,6,7,8-tetrahydrofolate + NADP(+) = (6R)-5,10-methenyltetrahydrofolate + NADPH. It catalyses the reaction (6R)-5,10-methenyltetrahydrofolate + H2O = (6R)-10-formyltetrahydrofolate + H(+). The protein operates within one-carbon metabolism; tetrahydrofolate interconversion. Catalyzes the oxidation of 5,10-methylenetetrahydrofolate to 5,10-methenyltetrahydrofolate and then the hydrolysis of 5,10-methenyltetrahydrofolate to 10-formyltetrahydrofolate. This is Bifunctional protein FolD from Thermotoga petrophila (strain ATCC BAA-488 / DSM 13995 / JCM 10881 / RKU-1).